A 445-amino-acid chain; its full sequence is tRNA-2-methylthio-N(6)-dimethylallyladenosine synthase (445 aa).

Positions 3–124 constitute an MTTase N-terminal domain; sequence KKLYIKTYGC…LPELISKVVR (122 aa). Positions 12, 48, 87, 162, 166, and 169 each coordinate [4Fe-4S] cluster. The Radical SAM core domain occupies 148–380; the sequence is YPQGTSAFIS…QQELMAQQLA (233 aa). In terms of domain architecture, TRAM spans 383–445; the sequence is TSCVGSTMKV…SLNSLTGEIL (63 aa).

The protein belongs to the methylthiotransferase family. MiaB subfamily. In terms of assembly, monomer. [4Fe-4S] cluster is required as a cofactor.

The protein resides in the cytoplasm. The catalysed reaction is N(6)-dimethylallyladenosine(37) in tRNA + (sulfur carrier)-SH + AH2 + 2 S-adenosyl-L-methionine = 2-methylsulfanyl-N(6)-dimethylallyladenosine(37) in tRNA + (sulfur carrier)-H + 5'-deoxyadenosine + L-methionine + A + S-adenosyl-L-homocysteine + 2 H(+). Functionally, catalyzes the methylthiolation of N6-(dimethylallyl)adenosine (i(6)A), leading to the formation of 2-methylthio-N6-(dimethylallyl)adenosine (ms(2)i(6)A) at position 37 in tRNAs that read codons beginning with uridine. This Rickettsia rickettsii (strain Iowa) protein is tRNA-2-methylthio-N(6)-dimethylallyladenosine synthase.